The following is a 318-amino-acid chain: Thymidylate synthase (318 aa).

DUMP-binding positions include Arg25 and 180 to 181 (RR). Catalysis depends on Cys200, which acts as the Nucleophile. Residues 220–223 (RSGD), Asn231, and 261–263 (HIY) each bind dUMP. Asp223 contributes to the (6R)-5,10-methylene-5,6,7,8-tetrahydrofolate binding site. (6R)-5,10-methylene-5,6,7,8-tetrahydrofolate is bound at residue Ala317.

It belongs to the thymidylate synthase family. Bacterial-type ThyA subfamily. In terms of assembly, homodimer.

It is found in the cytoplasm. The enzyme catalyses dUMP + (6R)-5,10-methylene-5,6,7,8-tetrahydrofolate = 7,8-dihydrofolate + dTMP. It functions in the pathway pyrimidine metabolism; dTTP biosynthesis. Its function is as follows. Catalyzes the reductive methylation of 2'-deoxyuridine-5'-monophosphate (dUMP) to 2'-deoxythymidine-5'-monophosphate (dTMP) while utilizing 5,10-methylenetetrahydrofolate (mTHF) as the methyl donor and reductant in the reaction, yielding dihydrofolate (DHF) as a by-product. This enzymatic reaction provides an intracellular de novo source of dTMP, an essential precursor for DNA biosynthesis. The sequence is that of Thymidylate synthase from Lactobacillus gasseri (strain ATCC 33323 / DSM 20243 / BCRC 14619 / CIP 102991 / JCM 1131 / KCTC 3163 / NCIMB 11718 / NCTC 13722 / AM63).